The primary structure comprises 275 residues: 2,3,4,5-tetrahydropyridine-2,6-dicarboxylate N-succinyltransferase (275 aa).

Substrate contacts are provided by R104 and D141.

The protein belongs to the transferase hexapeptide repeat family. As to quaternary structure, homotrimer.

Its subcellular location is the cytoplasm. The enzyme catalyses (S)-2,3,4,5-tetrahydrodipicolinate + succinyl-CoA + H2O = (S)-2-succinylamino-6-oxoheptanedioate + CoA. It functions in the pathway amino-acid biosynthesis; L-lysine biosynthesis via DAP pathway; LL-2,6-diaminopimelate from (S)-tetrahydrodipicolinate (succinylase route): step 1/3. The polypeptide is 2,3,4,5-tetrahydropyridine-2,6-dicarboxylate N-succinyltransferase (Mannheimia succiniciproducens (strain KCTC 0769BP / MBEL55E)).